The primary structure comprises 298 residues: uncharacterized protein (298 aa).

To M.tuberculosis Rv1486c, M.bovis Mb1522c and M.avium MAV321.

This is an uncharacterized protein from Mycobacterium leprae (strain TN).